The sequence spans 101 residues: Large ribosomal subunit protein uL23 (101 aa).

Belongs to the universal ribosomal protein uL23 family. In terms of assembly, part of the 50S ribosomal subunit. Contacts protein L29, and trigger factor when it is bound to the ribosome.

One of the early assembly proteins it binds 23S rRNA. One of the proteins that surrounds the polypeptide exit tunnel on the outside of the ribosome. Forms the main docking site for trigger factor binding to the ribosome. The protein is Large ribosomal subunit protein uL23 of Tolumonas auensis (strain DSM 9187 / NBRC 110442 / TA 4).